We begin with the raw amino-acid sequence, 258 residues long: MSAYPKSYNPFDDDGEDEGARPAPWRDARDLPDGPDAPADRQQYLRQEVLRRAEATAASTSRSLALMYESEKVGVASSEELARQRGVLERTEKMVDKMDQDLKISQKHINSIKSVFGGLVNYFKSKPVETPPEQNGTLTSQPNNRLKEAISTSKEQEAKYQASHPNLRKLDDTDPVPRGAGSAMSTDAYPKNPHLRAYHQKIDSNLDELSMGLGRLKDIALGMQTEIEEQDDILDRLTTKVDKLDVNIKSTERKVRQL.

The segment at 1–41 (MSAYPKSYNPFDDDGEDEGARPAPWRDARDLPDGPDAPADR) is disordered. Residues 18–32 (EGARPAPWRDARDLP) show a composition bias toward basic and acidic residues. Positions 76–107 (ASSEELARQRGVLERTEKMVDKMDQDLKISQK) form a coiled coil. Phosphoserine occurs at positions 77, 78, and 114. Residues threonine 130 and threonine 137 each carry the phosphothreonine modification. Residues 150–191 (ISTSKEQEAKYQASHPNLRKLDDTDPVPRGAGSAMSTDAYPK) are disordered. Residues serine 163, serine 182, serine 185, serine 204, and serine 210 each carry the phosphoserine modification. Residues 196 to 258 (RAYHQKIDSN…KSTERKVRQL (63 aa)) enclose the t-SNARE coiled-coil homology domain.

It belongs to the SNAP-25 family. In terms of assembly, forms a SNARE complex, composed of VAMP8, SNAP29 and STX17, involved in fusion of autophagosome with lysosome. Interacts with multiple syntaxins including STX6. Interacts with EIPR1. Interacts with STX17; this interaction is increased in the absence of TMEM39A. As to quaternary structure, (Microbial infection) Interacts with Hantaan hantavirus nucleoprotein; this interaction prevents the breakdown of the viral glycoprotein N by virus-triggered autophagy. (Microbial infection) The interaction with STX17 is decreased in presence of SARS coronavirus-2/SARS-CoV-2 ORF3A protein. In terms of tissue distribution, found in brain, heart, kidney, liver, lung, placenta, skeletal muscle, spleen and pancreas.

The protein resides in the cytoplasm. Its subcellular location is the golgi apparatus membrane. It is found in the cytoplasmic vesicle. It localises to the autophagosome membrane. The protein localises to the cell projection. The protein resides in the cilium membrane. In terms of biological role, SNAREs, soluble N-ethylmaleimide-sensitive factor-attachment protein receptors, are essential proteins for fusion of cellular membranes. SNAREs localized on opposing membranes assemble to form a trans-SNARE complex, an extended, parallel four alpha-helical bundle that drives membrane fusion. SNAP29 is a SNARE involved in autophagy through the direct control of autophagosome membrane fusion with the lysososome membrane. Also plays a role in ciliogenesis by regulating membrane fusions. The sequence is that of Synaptosomal-associated protein 29 from Homo sapiens (Human).